We begin with the raw amino-acid sequence, 1813 residues long: Nonribosomal peptide synthetase 1 (1813 aa).

The interval 89–494 is adenylation; it reads EKARRDPSRQ…GRGDQQVKLR (406 aa). The 76-residue stretch at 624 to 699 folds into the Carrier 1 domain; sequence EPQSERERQL…ELAITLKHSD (76 aa). O-(pantetheine 4'-phosphoryl)serine is present on Ser660. A condensation 1 region spans residues 738–1159; it reads DVYPCTTLQE…LPMTDDELAE (422 aa). The Carrier 2 domain maps to 1282 to 1358; sequence QVTTPKQQKL…DMADIAKESL (77 aa). Ser1319 carries the post-translational modification O-(pantetheine 4'-phosphoryl)serine. The segment at 1427 to 1806 is condensation 2; the sequence is FYLDAAVDQS…STLFQTDVME (380 aa).

The protein belongs to the NRP synthetase family.

The protein operates within siderophore biosynthesis. In terms of biological role, nonribosomal peptide synthetase; part of the gene cluster that mediates the biosynthesis of hydroxamate-containing siderophores that play a critical role in virulence via intracellular iron acquisition during macrophage infection. The protein is Nonribosomal peptide synthetase 1 of Ajellomyces capsulatus (Darling's disease fungus).